Reading from the N-terminus, the 447-residue chain is Phosphoglucosamine mutase (447 aa).

Residue S101 is the Phosphoserine intermediate of the active site. S101, D242, D244, and D246 together coordinate Mg(2+). Residue S101 is modified to Phosphoserine.

This sequence belongs to the phosphohexose mutase family. Mg(2+) is required as a cofactor. Activated by phosphorylation.

The enzyme catalyses alpha-D-glucosamine 1-phosphate = D-glucosamine 6-phosphate. Functionally, catalyzes the conversion of glucosamine-6-phosphate to glucosamine-1-phosphate. The polypeptide is Phosphoglucosamine mutase (Azorhizobium caulinodans (strain ATCC 43989 / DSM 5975 / JCM 20966 / LMG 6465 / NBRC 14845 / NCIMB 13405 / ORS 571)).